Consider the following 170-residue polypeptide: 3-hydroxydecanoyl-[acyl-carrier-protein] dehydratase (170 aa).

The active site involves His69.

It belongs to the thioester dehydratase family. FabA subfamily. Homodimer.

It localises to the cytoplasm. It catalyses the reaction a (3R)-hydroxyacyl-[ACP] = a (2E)-enoyl-[ACP] + H2O. The enzyme catalyses (3R)-hydroxydecanoyl-[ACP] = (2E)-decenoyl-[ACP] + H2O. The catalysed reaction is (2E)-decenoyl-[ACP] = (3Z)-decenoyl-[ACP]. The protein operates within lipid metabolism; fatty acid biosynthesis. In terms of biological role, necessary for the introduction of cis unsaturation into fatty acids. Catalyzes the dehydration of (3R)-3-hydroxydecanoyl-ACP to E-(2)-decenoyl-ACP and then its isomerization to Z-(3)-decenoyl-ACP. Can catalyze the dehydratase reaction for beta-hydroxyacyl-ACPs with saturated chain lengths up to 16:0, being most active on intermediate chain length. The polypeptide is 3-hydroxydecanoyl-[acyl-carrier-protein] dehydratase (Idiomarina loihiensis (strain ATCC BAA-735 / DSM 15497 / L2-TR)).